The sequence spans 247 residues: Potassium channel Ftrac_2467 (247 aa).

6 consecutive transmembrane segments (helical) span residues 23–44, 56–78, 89–117, 142–165, 187–210, and 215–237; these read TRIETFSDAVFALAITLLVLSS, SMRDVIPFAICVALIIVIWYQHY, KVTILLNTILLFVLLVYVYPLKFLARFLS, LKLLMVNYGLGAFAIFLVFSLMYW, SIIANLLMCSVPLLSLIITLIDPW, and TTILSGFLYFLYVPIMIVFGRIT. The short motif at 24-30 is the RxxxFSD motif element; sequence RIETFSD.

It belongs to the TMEM175 family. As to quaternary structure, homotetramer.

The protein localises to the cell membrane. It carries out the reaction K(+)(in) = K(+)(out). Functionally, potassium channel; forms a potassium-permeable leak-like channel with weak selectivity for potassium. The channel is permeable for K(+), Rb(+) and Cs(+). This chain is Potassium channel Ftrac_2467, found in Marivirga tractuosa (strain ATCC 23168 / DSM 4126 / NBRC 15989 / NCIMB 1408 / VKM B-1430 / H-43) (Microscilla tractuosa).